The following is a 520-amino-acid chain: 1,4-alpha-glucan branching enzyme TTHA1902 (520 aa).

Glu184 acts as the Nucleophile in catalysis. Substrate contacts are provided by Arg265 and Gly282. Asp353 functions as the Proton donor in the catalytic mechanism. The substrate site is built by Trp404, Asp460, and Gln469.

It belongs to the glycosyl hydrolase 57 family.

The enzyme catalyses Transfers a segment of a (1-&gt;4)-alpha-D-glucan chain to a primary hydroxy group in a similar glucan chain.. The protein operates within glycan biosynthesis; glycogen biosynthesis. Catalyzes the formation of branch points in alpha-glucans by cleavage of an alpha-1,4 glycosidic bond and subsequent transfer of the cleaved-off oligosaccharide to a new alpha-1,6 position. The branch chain-length distribution of the reaction products shows degree of polymerization (DP) of 3 to 13, with two local maxima at DP 7 and DP 11. Exhibits an alpha-retaining catalytic mechanism. Is involved in glycogen biosynthesis. Shows a secondary activity, i.e. the hydrolysis of the substrate, being 4% of the total activity. Can use amylose as substrate but not alpha-1,4-linked oligosaccharides of 2-7 glucose residues, beta-cyclodextrin, 6-O-glucosyl-beta-cyclodextrin and 6-O-maltosyl-beta-cyclodextrin. Is not able to branch amylopectin further, it only hydrolyzes amylopectin. Thus, displays preference for linear and long substrates (amylose) over branched structures (amylopectin). The polypeptide is 1,4-alpha-glucan branching enzyme TTHA1902 (Thermus thermophilus (strain ATCC 27634 / DSM 579 / HB8)).